The sequence spans 120 residues: Glycine cleavage system H protein (120 aa).

The Lipoyl-binding domain occupies 17 to 99; it reads VATVGITNYA…QGAGWFFKLK (83 aa). The residue at position 58 (Lys58) is an N6-lipoyllysine.

The protein belongs to the GcvH family. The glycine cleavage system is composed of four proteins: P, T, L and H. (R)-lipoate is required as a cofactor.

Functionally, the glycine cleavage system catalyzes the degradation of glycine. The H protein shuttles the methylamine group of glycine from the P protein to the T protein. The polypeptide is Glycine cleavage system H protein (Rhizobium leguminosarum bv. trifolii (strain WSM2304)).